Consider the following 117-residue polypeptide: Transcription elongation factor A protein-like 8 (117 aa).

A disordered region spans residues 1–82 (MQKSCDENEG…EEVIRGVDEL (82 aa)). The span at 41 to 82 (NVREETEGSHRGEPAEPSPEPKEDTPARHLNPEEVIRGVDEL) shows a compositional bias: basic and acidic residues. A coiled-coil region spans residues 73 to 100 (EEVIRGVDELERLREEIRRVRNKFVLMH).

Belongs to the TFS-II family. TFA subfamily.

It is found in the nucleus. May be involved in transcriptional regulation. The polypeptide is Transcription elongation factor A protein-like 8 (Tceal8) (Mus musculus (Mouse)).